The following is a 287-amino-acid chain: MIKIGAHMPISKGFDRVPQDTVNIGGNAYQIFPHNARSWSAKLPSDDITTKFKREMKKYGIDWENAFCHSGYLINLASPKEDIWQKSVELLKKEVEICRKLGIRYLNIHPGSHLGAGEKEGTERIVRGLNEVLNSTEDVVILLENVSQKGGNIGYKLDQLKKIRDLVDQKDRVAITYDTCHGFDSGYDITKKEGVEALLNEIETLFGLERLKMIHLNDSKYPLGAAKDRHERIGSGFIGEEGFAVFFSFKEIQKVPWILETPGGNEEHAEDIKKVFEIIEKFDIEVD.

Zn(2+) contacts are provided by H69, H109, E144, D178, H181, H215, D228, H230, and E260.

The protein belongs to the AP endonuclease 2 family. Zn(2+) serves as cofactor.

It catalyses the reaction Endonucleolytic cleavage to 5'-phosphooligonucleotide end-products.. In terms of biological role, endonuclease IV plays a role in DNA repair. It cleaves phosphodiester bonds at apurinic or apyrimidinic (AP) sites, generating a 3'-hydroxyl group and a 5'-terminal sugar phosphate. This is Probable endonuclease 4 from Thermotoga petrophila (strain ATCC BAA-488 / DSM 13995 / JCM 10881 / RKU-1).